Consider the following 379-residue polypeptide: MSRDDNGWSKLYPDLLRSIFESLSCLDFHRAGTVCSNWYAVSRSCPLYPWRIVFRGKNSVLFDPIQDKIYTKNLLGIDLSKIHCLASYGNWILIVDPRLDFYLLNVFTRETINLPSLESSLRGDRPFRFIRNDDESGYFLELYGTKFLLTWNDFRFEKTAILWVNGRNGDYVVAWAIKQFYIFSYKKIGNDDDDKRWSITCTQCEDMAYKDNKLYVYTFDHYINILDFSGNSPKEPMEENPYLSHPFSFVDAIYKLRLAVTREGKVLIVLSLVGLDKKICIYKLNLKIGDWEIVESLGDEMLIFGHGVTIRAPDKDISGGGLKSDSICFLYDDYLSDHYLTMKRQPICGVFDLATSTITWHTRLEDLSSKICWFVPGCA.

In terms of domain architecture, F-box spans 6–53 (NGWSKLYPDLLRSIFESLSCLDFHRAGTVCSNWYAVSRSCPLYPWRIV).

The sequence is that of Putative F-box protein At2g33190 from Arabidopsis thaliana (Mouse-ear cress).